Reading from the N-terminus, the 202-residue chain is Prephenate decarboxylase (202 aa).

This sequence belongs to the prephenate decarboxylase family.

It catalyses the reaction prephenate + H(+) = 3-[(4R)-4-hydroxycyclohexa-1,5-dien-1-yl]-2-oxopropanoate + CO2. In vivo, involved in the biosynthesis of 2-carboxy-6-hydroxyoctahydroindole (Choi) present in the nonribosomal glycopeptides aeruginoside 126A and B. AerD is an unusual prephenate decarboxylase that avoids the typical aromatization of the cyclohexadienol ring of prephenate. AerD catalyzes the protonation at C8 followed by decarboxylation to produce the dihydro-4-hydroxyphenylpyruvate regioisomer A258 (H2HPP A258)(3-(4-hydroxycyclohexa- 1,5-dienyl)-2-oxopropanoic acid), which is able to undergo a nonenzymatic isomerization to produce dihydro-4-hydroxyphenylpyruvate regioisomer A295 (H2HPP A295)(3-(4-hydroxycyclohex-2-enylidene)-2-oxopropanoic acid). In Planktothrix agardhii (strain NIVA-CYA 126/8), this protein is Prephenate decarboxylase.